The following is a 376-amino-acid chain: Cytochrome c oxidase subunit 2, mitochondrial (376 aa).

The chain crosses the membrane as a helical span at residues 164–184 (IFFFLVQILVFVLWVLSRALW). The Mitochondrial matrix portion of the chain corresponds to 185-204 (CFRSKISPIPQRIVHGTTIE). A helical membrane pass occupies residues 205–225 (ILWTILPSIILMFIAIPSFTL). Topologically, residues 226–376 (LYSMDDVVVD…YGSWVSNQIQ (151 aa)) are mitochondrial intermembrane. Residues His-309, Cys-344, Glu-346, Cys-348, His-352, and Met-355 each coordinate Cu cation. Glu-346 serves as a coordination point for Mg(2+).

It belongs to the cytochrome c oxidase subunit 2 family. In terms of assembly, component of the cytochrome c oxidase (complex IV, CIV), a multisubunit enzyme composed of a catalytic core of 3 subunits and several supernumerary subunits. The complex exists as a monomer or a dimer and forms supercomplexes (SCs) in the inner mitochondrial membrane with ubiquinol-cytochrome c oxidoreductase (cytochrome b-c1 complex, complex III, CIII). Cu cation is required as a cofactor.

The protein localises to the mitochondrion inner membrane. It catalyses the reaction 4 Fe(II)-[cytochrome c] + O2 + 8 H(+)(in) = 4 Fe(III)-[cytochrome c] + 2 H2O + 4 H(+)(out). Component of the cytochrome c oxidase, the last enzyme in the mitochondrial electron transport chain which drives oxidative phosphorylation. The respiratory chain contains 3 multisubunit complexes succinate dehydrogenase (complex II, CII), ubiquinol-cytochrome c oxidoreductase (cytochrome b-c1 complex, complex III, CIII) and cytochrome c oxidase (complex IV, CIV), that cooperate to transfer electrons derived from NADH and succinate to molecular oxygen, creating an electrochemical gradient over the inner membrane that drives transmembrane transport and the ATP synthase. Cytochrome c oxidase is the component of the respiratory chain that catalyzes the reduction of oxygen to water. Electrons originating from reduced cytochrome c in the intermembrane space (IMS) are transferred via the dinuclear copper A center (CU(A)) of subunit 2 and heme A of subunit 1 to the active site in subunit 1, a binuclear center (BNC) formed by heme A3 and copper B (CU(B)). The BNC reduces molecular oxygen to 2 water molecules using 4 electrons from cytochrome c in the IMS and 4 protons from the mitochondrial matrix. This chain is Cytochrome c oxidase subunit 2, mitochondrial (COX2), found in Vigna unguiculata (Cowpea).